The sequence spans 352 residues: Ly6/PLAUR domain-containing protein 3 (352 aa).

The signal sequence occupies residues 1 to 32 (MDAARRGDTQPVMWTTRWLLLLPLLLCEGAQA). A UPAR/Ly6 1 domain is found at 35–128 (CYSCVQKADD…LNLTLRGLNP (94 aa)). Asn-120, Asn-131, Asn-178, and Asn-185 each carry an N-linked (GlcNAc...) asparagine glycan. The UPAR/Ly6 2 domain maps to 142 to 224 (CYSCMGLSRE…GSCCQGPRCN (83 aa)). The segment covering 236–249 (RIPPLVLLPPPTTP) has biased composition (pro residues). Residues 236 to 330 (RIPPLVLLPP…KGGAQIPSKG (95 aa)) are disordered. Residues 250–285 (APSTRTQNSSSTTSTTAPTTATTTIKPTTVQASHTS) are compositionally biased toward low complexity. Basic and acidic residues-rich tracts occupy residues 286-300 (STHE…EEGS) and 309-320 (HQDRSNMGKFPE). Gly-330 carries GPI-anchor amidated glycine lipidation. Residues 331–352 (GSDALGSWLSAILLTVVAGAML) constitute a propeptide, removed in mature form.

As to quaternary structure, interacts with AGR2 and AGR3. Binds laminin-1 and laminin-5. Interacts with LGALS3. In terms of tissue distribution, found predominantly on the basal layers of squamous epithelium. Expressed in the gravid uterus and on epithelial of the upper gastrointestinal tract. It has been found in tumor lines which metastasize via the lymphatic system.

It is found in the cell membrane. Functionally, supports cell migration. May be involved in tumor progression. This Rattus norvegicus (Rat) protein is Ly6/PLAUR domain-containing protein 3 (Lypd3).